A 293-amino-acid polypeptide reads, in one-letter code: 4-diphosphocytidyl-2-C-methyl-D-erythritol kinase (293 aa).

The active site involves K16. 99 to 109 (PMGAGLGGGSS) lines the ATP pocket. The active site involves D141.

It belongs to the GHMP kinase family. IspE subfamily.

The enzyme catalyses 4-CDP-2-C-methyl-D-erythritol + ATP = 4-CDP-2-C-methyl-D-erythritol 2-phosphate + ADP + H(+). Its pathway is isoprenoid biosynthesis; isopentenyl diphosphate biosynthesis via DXP pathway; isopentenyl diphosphate from 1-deoxy-D-xylulose 5-phosphate: step 3/6. Catalyzes the phosphorylation of the position 2 hydroxy group of 4-diphosphocytidyl-2C-methyl-D-erythritol. This chain is 4-diphosphocytidyl-2-C-methyl-D-erythritol kinase, found in Burkholderia orbicola (strain MC0-3).